Reading from the N-terminus, the 105-residue chain is Large ribosomal subunit protein uL18c (105 aa).

This sequence belongs to the universal ribosomal protein uL18 family. In terms of assembly, part of the 50S ribosomal subunit; contacts the 5S rRNA.

The protein resides in the plastid. The protein localises to the chloroplast. In terms of biological role, binds 5S rRNA, forms part of the central protuberance of the 50S subunit. This chain is Large ribosomal subunit protein uL18c (rpl18), found in Cyanidium caldarium (Red alga).